The sequence spans 114 residues: Iron-sulfur cluster insertion protein ErpA (114 aa).

Iron-sulfur cluster-binding residues include Cys42, Cys106, and Cys108.

This sequence belongs to the HesB/IscA family. In terms of assembly, homodimer. It depends on iron-sulfur cluster as a cofactor.

Functionally, required for insertion of 4Fe-4S clusters for at least IspG. The protein is Iron-sulfur cluster insertion protein ErpA of Yersinia enterocolitica serotype O:8 / biotype 1B (strain NCTC 13174 / 8081).